Reading from the N-terminus, the 231-residue chain is tRNA (guanine-N(1)-)-methyltransferase (231 aa).

Residues G112 and 132-137 (IGDYIL) contribute to the S-adenosyl-L-methionine site.

It belongs to the RNA methyltransferase TrmD family. In terms of assembly, homodimer.

It localises to the cytoplasm. The enzyme catalyses guanosine(37) in tRNA + S-adenosyl-L-methionine = N(1)-methylguanosine(37) in tRNA + S-adenosyl-L-homocysteine + H(+). Functionally, specifically methylates guanosine-37 in various tRNAs. The protein is tRNA (guanine-N(1)-)-methyltransferase of Sulfurimonas denitrificans (strain ATCC 33889 / DSM 1251) (Thiomicrospira denitrificans (strain ATCC 33889 / DSM 1251)).